Consider the following 62-residue polypeptide: Photosystem II reaction center protein Z (62 aa).

The next 2 helical transmembrane spans lie at 8–28 and 41–61; these read ALFALIATSSILLISVPIVFA and FSGTSLWIGLVFLVAILNSLI.

It belongs to the PsbZ family. PSII is composed of 1 copy each of membrane proteins PsbA, PsbB, PsbC, PsbD, PsbE, PsbF, PsbH, PsbI, PsbJ, PsbK, PsbL, PsbM, PsbT, PsbY, PsbZ, Psb30/Ycf12, at least 3 peripheral proteins of the oxygen-evolving complex and a large number of cofactors. It forms dimeric complexes.

Its subcellular location is the plastid. The protein resides in the chloroplast thylakoid membrane. In terms of biological role, may control the interaction of photosystem II (PSII) cores with the light-harvesting antenna, regulates electron flow through the 2 photosystem reaction centers. PSII is a light-driven water plastoquinone oxidoreductase, using light energy to abstract electrons from H(2)O, generating a proton gradient subsequently used for ATP formation. The protein is Photosystem II reaction center protein Z of Drimys granadensis.